The following is a 1001-amino-acid chain: Serine/threonine-protein kinase TAO1 (1001 aa).

At Ser9 the chain carries Phosphoserine. The Protein kinase domain occupies 28–281 (FTDLREIGHG…SEELLKHMFV (254 aa)). ATP is bound by residues 34-42 (IGHGSFGAV) and Lys57. Asp151 serves as the catalytic Proton acceptor. Disordered stretches follow at residues 324–380 (PAVE…DKSE) and 404–431 (ENYQ…HKSH). Residues 350 to 370 (SNQSIPSMSISASSQSSSVNS) are compositionally biased toward low complexity. Phosphoserine is present on residues Ser421 and Ser445. The stretch at 458-651 (SELREQMSGY…QTQKDLEHAM (194 aa)) forms a coiled coil. Residues 567-587 (KEELNENQSTPKKEKQEWLSK) are disordered. Basic and acidic residues predominate over residues 577–587 (PKKEKQEWLSK). Thr669 carries the phosphothreonine modification. Residues 754 to 877 (KAVLKRLKEE…LERQAREIEA (124 aa)) are a coiled coil. Residues 905 to 1001 (PGASSWSHNP…ISNGSHMSYT (97 aa)) form a disordered region. Positions 906-915 (GASSWSHNPT) are enriched in polar residues. The residue at position 965 (Ser965) is a Phosphoserine. Polar residues predominate over residues 975-1001 (GGRTEQGMSRSTSVTSQISNGSHMSYT).

It belongs to the protein kinase superfamily. STE Ser/Thr protein kinase family. STE20 subfamily. Self-associates. Interacts with MAP2K3. Interacts with SPRED1. Interacts with TESK1; the interaction inhibits TAOK1 kinase activity. Interacts with MAP3K7. Post-translationally, proteolytically processed by caspase-3 (CASP3). In terms of processing, autophosphorylated. Phosphorylated by ATM in response to DNA damage. Phosphorylated by LRRK2.

Its subcellular location is the cytoplasm. The enzyme catalyses L-seryl-[protein] + ATP = O-phospho-L-seryl-[protein] + ADP + H(+). It catalyses the reaction L-threonyl-[protein] + ATP = O-phospho-L-threonyl-[protein] + ADP + H(+). Serine/threonine-protein kinase activity is inhibited by SPRED1. Serine/threonine-protein kinase involved in various processes such as p38/MAPK14 stress-activated MAPK cascade, DNA damage response and regulation of cytoskeleton stability. Phosphorylates MAP2K3, MAP2K6 and MARK2. Acts as an activator of the p38/MAPK14 stress-activated MAPK cascade by mediating phosphorylation and subsequent activation of the upstream MAP2K3 and MAP2K6 kinases. Involved in G-protein coupled receptor signaling to p38/MAPK14. In response to DNA damage, involved in the G2/M transition DNA damage checkpoint by activating the p38/MAPK14 stress-activated MAPK cascade, probably by mediating phosphorylation of MAP2K3 and MAP2K6. Acts as a regulator of cytoskeleton stability by phosphorylating 'Thr-208' of MARK2, leading to activate MARK2 kinase activity and subsequent phosphorylation and detachment of MAPT/TAU from microtubules. Also acts as a regulator of apoptosis: regulates apoptotic morphological changes, including cell contraction, membrane blebbing and apoptotic bodies formation via activation of the MAPK8/JNK cascade. During fetal development, it plays an essential role in the regulation of neuronal differentiation and migration to the cortical plate. This chain is Serine/threonine-protein kinase TAO1 (Taok1), found in Rattus norvegicus (Rat).